Reading from the N-terminus, the 99-residue chain is Ferredoxin (99 aa).

The 2Fe-2S ferredoxin-type domain occupies 4–96; the sequence is YKIHLLCEEE…DCTISTHVEQ (93 aa). Positions 42, 47, 50, and 80 each coordinate [2Fe-2S] cluster.

This sequence belongs to the 2Fe2S plant-type ferredoxin family. In terms of assembly, forms a complex with heterodimeric ferredoxin-thioredoxin reductase (FTR) and thioredoxin. [2Fe-2S] cluster serves as cofactor.

It is found in the plastid. It localises to the chloroplast. In terms of biological role, ferredoxins are iron-sulfur proteins that transfer electrons in a wide variety of metabolic reactions. In Pyropia yezoensis (Susabi-nori), this protein is Ferredoxin (petF).